Consider the following 160-residue polypeptide: MNVVQGNIESKNAKIAIVVSRFNSFLVESLLEGAVDTLKRFGQVSDENITVVRVPGAVELPLAARRVAASGKFDGIIALGAVIRGGTPHFDFVAGECNKGLAQVALEFDLPVSFGVLTTDTIEQAIERSGTKAGNKGGEAALGLLEMVNVLQELEQQLQD.

Residues Phe22, 57 to 59 (AVE), and 81 to 83 (AVI) contribute to the 5-amino-6-(D-ribitylamino)uracil site. 86-87 (GT) contacts (2S)-2-hydroxy-3-oxobutyl phosphate. The Proton donor role is filled by His89. Phe114 serves as a coordination point for 5-amino-6-(D-ribitylamino)uracil. Arg128 serves as a coordination point for (2S)-2-hydroxy-3-oxobutyl phosphate.

Belongs to the DMRL synthase family. As to quaternary structure, forms an icosahedral capsid composed of 60 subunits, arranged as a dodecamer of pentamers.

It catalyses the reaction (2S)-2-hydroxy-3-oxobutyl phosphate + 5-amino-6-(D-ribitylamino)uracil = 6,7-dimethyl-8-(1-D-ribityl)lumazine + phosphate + 2 H2O + H(+). It participates in cofactor biosynthesis; riboflavin biosynthesis; riboflavin from 2-hydroxy-3-oxobutyl phosphate and 5-amino-6-(D-ribitylamino)uracil: step 1/2. Its function is as follows. Catalyzes the formation of 6,7-dimethyl-8-ribityllumazine by condensation of 5-amino-6-(D-ribitylamino)uracil with 3,4-dihydroxy-2-butanone 4-phosphate. This is the penultimate step in the biosynthesis of riboflavin. This is 6,7-dimethyl-8-ribityllumazine synthase from Shewanella sediminis (strain HAW-EB3).